A 287-amino-acid polypeptide reads, in one-letter code: mRNA-capping enzyme regulatory subunit (287 aa).

This sequence belongs to the chordopoxvirinae mRNA-capping enzyme regulatory subunit family. In terms of assembly, heterodimer of a catalytic and a regulatory subunit. Intrinsic methyltransferase activity of the catalytic subunit is weak and needs to be stimulated 30- to 50-fold by the regulatory subunit, which is itself catalytically inert.

Its subcellular location is the virion. Regulatory subunit of the mRNA cap enzyme which stabilizes the catalytic subunit and enhances its methyltransferase activity through an allosteric mechanism. Heterodimeric mRNA capping enzyme catalyzes the linkage of a N7-methyl-guanosine moiety to the first transcribed nucleotide (cap 0 structure), whereas the polymerase associated VP39 is responsible for a second methylation at the 2'-O position of the ribose (cap 1 structure). In terms of biological role, the heterodimeric enzyme is also involved in early viral gene transcription termination and intermediate viral gene transcription initiation. Early gene transcription termination requires the termination factor VTF, the DNA-dependent ATPase NPH-I and the Rap94 subunit of the viral RNA polymerase, as well as the presence of a specific termination motif. Binds, together with RAP94, to the termination motif 5'-UUUUUNU-3' in the nascent early mRNA. The polypeptide is mRNA-capping enzyme regulatory subunit (Vaccinia virus (strain Ankara) (VACV)).